Here is a 477-residue protein sequence, read N- to C-terminus: Ribulose bisphosphate carboxylase large chain (477 aa).

Residues Met-1 to Ser-2 constitute a propeptide that is removed on maturation. An N-acetylproline modification is found at Pro-3. Lys-14 bears the N6,N6,N6-trimethyllysine mark. 2 residues coordinate substrate: Asn-123 and Thr-173. Residue Lys-175 is the Proton acceptor of the active site. Lys-177 is a binding site for substrate. The Mg(2+) site is built by Lys-201, Asp-203, and Glu-204. Lys-201 bears the N6-carboxylysine mark. The active-site Proton acceptor is His-294. The substrate site is built by Arg-295, His-327, and Ser-379.

This sequence belongs to the RuBisCO large chain family. Type I subfamily. As to quaternary structure, heterohexadecamer of 8 large chains and 8 small chains; disulfide-linked. The disulfide link is formed within the large subunit homodimers. Requires Mg(2+) as cofactor. Post-translationally, the disulfide bond which can form in the large chain dimeric partners within the hexadecamer appears to be associated with oxidative stress and protein turnover.

The protein resides in the plastid. The protein localises to the chloroplast. It catalyses the reaction 2 (2R)-3-phosphoglycerate + 2 H(+) = D-ribulose 1,5-bisphosphate + CO2 + H2O. The catalysed reaction is D-ribulose 1,5-bisphosphate + O2 = 2-phosphoglycolate + (2R)-3-phosphoglycerate + 2 H(+). In terms of biological role, ruBisCO catalyzes two reactions: the carboxylation of D-ribulose 1,5-bisphosphate, the primary event in carbon dioxide fixation, as well as the oxidative fragmentation of the pentose substrate in the photorespiration process. Both reactions occur simultaneously and in competition at the same active site. The protein is Ribulose bisphosphate carboxylase large chain of Persea americana (Avocado).